The sequence spans 122 residues: Urease subunit beta (122 aa).

A disordered region spans residues 102-122 (DGGTAVAGEPRPGIAAERDHQ).

This sequence belongs to the urease beta subunit family. Heterotrimer of UreA (gamma), UreB (beta) and UreC (alpha) subunits. Three heterotrimers associate to form the active enzyme.

The protein resides in the cytoplasm. The enzyme catalyses urea + 2 H2O + H(+) = hydrogencarbonate + 2 NH4(+). It functions in the pathway nitrogen metabolism; urea degradation; CO(2) and NH(3) from urea (urease route): step 1/1. This chain is Urease subunit beta, found in Paenarthrobacter aurescens (strain TC1).